The sequence spans 219 residues: Proteasome subunit beta 2 (219 aa).

A propeptide spans 1–25 (removed in mature form; by autocatalysis); sequence MAEWIAGGLEGPAGRGLDERVVRSG. Thr-26 serves as the catalytic Nucleophile.

Belongs to the peptidase T1B family. As to quaternary structure, the 20S proteasome core is composed of 14 alpha and 14 beta subunits that assemble into four stacked heptameric rings, resulting in a barrel-shaped structure. The two inner rings, each composed of seven catalytic beta subunits, are sandwiched by two outer rings, each composed of seven alpha subunits. The catalytic chamber with the active sites is on the inside of the barrel. Has a gated structure, the ends of the cylinder being occluded by the N-termini of the alpha-subunits. Is capped at one or both ends by the proteasome regulatory ATPase, PAN.

The protein localises to the cytoplasm. It catalyses the reaction Cleavage of peptide bonds with very broad specificity.. Its activity is regulated as follows. The formation of the proteasomal ATPase PAN-20S proteasome complex, via the docking of the C-termini of PAN into the intersubunit pockets in the alpha-rings, triggers opening of the gate for substrate entry. Interconversion between the open-gate and close-gate conformations leads to a dynamic regulation of the 20S proteasome proteolysis activity. Component of the proteasome core, a large protease complex with broad specificity involved in protein degradation. The protein is Proteasome subunit beta 2 of Aeropyrum pernix (strain ATCC 700893 / DSM 11879 / JCM 9820 / NBRC 100138 / K1).